We begin with the raw amino-acid sequence, 89 residues long: Elongation factor 1-beta (89 aa).

This sequence belongs to the EF-1-beta/EF-1-delta family.

Functionally, promotes the exchange of GDP for GTP in EF-1-alpha/GDP, thus allowing the regeneration of EF-1-alpha/GTP that could then be used to form the ternary complex EF-1-alpha/GTP/AAtRNA. This is Elongation factor 1-beta from Methanosarcina barkeri (strain Fusaro / DSM 804).